The following is a 324-amino-acid chain: Pseudouridine-5'-phosphate glycosidase (324 aa).

Glu43 functions as the Proton donor in the catalytic mechanism. 2 residues coordinate substrate: Lys104 and Val124. Asp156 serves as a coordination point for Mn(2+). 158-160 contributes to the substrate binding site; sequence SAD. The active-site Nucleophile is Lys177.

The protein belongs to the pseudouridine-5'-phosphate glycosidase family. In terms of assembly, homotrimer. The cofactor is Mn(2+).

It carries out the reaction D-ribose 5-phosphate + uracil = psi-UMP + H2O. Its function is as follows. Catalyzes the reversible cleavage of pseudouridine 5'-phosphate (PsiMP) to ribose 5-phosphate and uracil. Functions biologically in the cleavage direction, as part of a pseudouridine degradation pathway. The sequence is that of Pseudouridine-5'-phosphate glycosidase from Salinispora tropica (strain ATCC BAA-916 / DSM 44818 / JCM 13857 / NBRC 105044 / CNB-440).